Consider the following 330-residue polypeptide: GTP 3',8-cyclase (330 aa).

Positions 14–225 constitute a Radical SAM core domain; sequence RFGRTVDYVR…RERLADAYPE (212 aa). Arg23 is a GTP binding site. [4Fe-4S] cluster is bound by residues Cys30 and Cys34. An S-adenosyl-L-methionine-binding site is contributed by Tyr36. Residue Cys37 participates in [4Fe-4S] cluster binding. Position 70 (Arg70) interacts with GTP. S-adenosyl-L-methionine is bound at residue Gly74. Thr101 serves as a coordination point for GTP. Ser125 contacts S-adenosyl-L-methionine. Lys162 provides a ligand contact to GTP. Positions 259 and 262 each coordinate [4Fe-4S] cluster. 264-266 lines the GTP pocket; the sequence is KLR. [4Fe-4S] cluster is bound at residue Cys276. Basic and acidic residues predominate over residues 309–318; that stretch reads KPKDGLKSSH. The disordered stretch occupies residues 309-330; that stretch reads KPKDGLKSSHDTAASSMSQIGG. Positions 319–330 are enriched in polar residues; the sequence is DTAASSMSQIGG.

The protein belongs to the radical SAM superfamily. MoaA family. As to quaternary structure, monomer and homodimer. It depends on [4Fe-4S] cluster as a cofactor.

The catalysed reaction is GTP + AH2 + S-adenosyl-L-methionine = (8S)-3',8-cyclo-7,8-dihydroguanosine 5'-triphosphate + 5'-deoxyadenosine + L-methionine + A + H(+). The protein operates within cofactor biosynthesis; molybdopterin biosynthesis. Functionally, catalyzes the cyclization of GTP to (8S)-3',8-cyclo-7,8-dihydroguanosine 5'-triphosphate. The sequence is that of GTP 3',8-cyclase from Chlorobaculum tepidum (strain ATCC 49652 / DSM 12025 / NBRC 103806 / TLS) (Chlorobium tepidum).